The following is a 560-amino-acid chain: Membrane protein insertase YidC (560 aa).

Residues 1-21 traverse the membrane as a helical segment; the sequence is MDIKRTILIAALAIVSYVMVL. The interval 42–66 is disordered; sequence VAPGLPDGVPAANNGASADVPSANA. Helical transmembrane passes span 341-361, 367-387, 437-457, 468-488, and 515-535; these read LELTVDYGFLWFIAQPIFWLL, LLGNWGWSIIVLTMLIKGLFF, LGGCLPILVQMPVFLALYWVL, WMLWITDLSIKDPFFILPIIM, and PIIFTFFFLWFPAGLVLYWVV.

This sequence belongs to the OXA1/ALB3/YidC family. Type 1 subfamily. In terms of assembly, interacts with the Sec translocase complex via SecD. Specifically interacts with transmembrane segments of nascent integral membrane proteins during membrane integration.

Its subcellular location is the cell inner membrane. In terms of biological role, required for the insertion and/or proper folding and/or complex formation of integral membrane proteins into the membrane. Involved in integration of membrane proteins that insert both dependently and independently of the Sec translocase complex, as well as at least some lipoproteins. Aids folding of multispanning membrane proteins. This Pseudomonas putida (strain W619) protein is Membrane protein insertase YidC.